A 146-amino-acid polypeptide reads, in one-letter code: Cytochrome c-type biogenesis protein CcmE (146 aa).

The Cytoplasmic segment spans residues 1–7 (MQAKHQR). The chain crosses the membrane as a helical; Signal-anchor for type II membrane protein span at residues 8–28 (LILGIIALAAVIAAGFLALVA). Residues 29-146 (FKKQAAYFFT…AATQTTLQEK (118 aa)) lie on the Periplasmic side of the membrane. Heme contacts are provided by His123 and Tyr127.

It belongs to the CcmE/CycJ family.

Its subcellular location is the cell inner membrane. In terms of biological role, heme chaperone required for the biogenesis of c-type cytochromes. Transiently binds heme delivered by CcmC and transfers the heme to apo-cytochromes in a process facilitated by CcmF and CcmH. The polypeptide is Cytochrome c-type biogenesis protein CcmE (Zymomonas mobilis subsp. mobilis (strain ATCC 31821 / ZM4 / CP4)).